Reading from the N-terminus, the 306-residue chain is MAEIPIDFPPLKIQEKIATILDTFTELSAELSAELSAELSAELSAELSAELSAELSAELSAELSAELSAELSAELSAELSAELSAELRERRKQYAFYRDYLLNQENIRKIYGANIPFETFQIRDICEINRGREINEKYLRENPGEFPVYSSATTNGGLIGKINDYDFHGEYVTWTTGGAHAGNVFYRNEKFSCSQNCGLLEVKNKNKFSSKFLCFALKLQSKKFVNYASAIPVLTIKRIAEIELSFPPLEIQEKIADILFAFEKLCNDLTEGIPAEIELRKKQLDYYQNFLFNWVQNKKLESLKSL.

It belongs to the type-I restriction system S methylase family. As to quaternary structure, the methyltransferase is composed of M and S polypeptides.

Functionally, the specificity (S) subunit of a type I methyltransferase (MTase); this subunit dictates DNA sequence specificity. The single R subunit has multiple frameshifts and is probably not expressed. The sequence is that of Putative type I specificity subunit S.MpnORF285P from Mycoplasma pneumoniae (strain ATCC 29342 / M129 / Subtype 1) (Mycoplasmoides pneumoniae).